Here is a 95-residue protein sequence, read N- to C-terminus: Co-chaperonin GroES (95 aa).

It belongs to the GroES chaperonin family. In terms of assembly, heptamer of 7 subunits arranged in a ring. Interacts with the chaperonin GroEL.

The protein resides in the cytoplasm. In terms of biological role, together with the chaperonin GroEL, plays an essential role in assisting protein folding. The GroEL-GroES system forms a nano-cage that allows encapsulation of the non-native substrate proteins and provides a physical environment optimized to promote and accelerate protein folding. GroES binds to the apical surface of the GroEL ring, thereby capping the opening of the GroEL channel. This is Co-chaperonin GroES from Pelodictyon phaeoclathratiforme (strain DSM 5477 / BU-1).